Here is an 89-residue protein sequence, read N- to C-terminus: DNA/RNA-binding protein Alba 1 (89 aa).

Belongs to the histone-like Alba family.

The protein resides in the cytoplasm. The protein localises to the chromosome. In terms of biological role, binds double-stranded DNA tightly but without sequence specificity. Involved in DNA compaction. The chain is DNA/RNA-binding protein Alba 1 from Archaeoglobus fulgidus (strain ATCC 49558 / DSM 4304 / JCM 9628 / NBRC 100126 / VC-16).